The following is a 335-amino-acid chain: Nucleoid-associated protein Pput_1012 (335 aa).

It belongs to the YejK family.

The protein resides in the cytoplasm. It is found in the nucleoid. The polypeptide is Nucleoid-associated protein Pput_1012 (Pseudomonas putida (strain ATCC 700007 / DSM 6899 / JCM 31910 / BCRC 17059 / LMG 24140 / F1)).